The primary structure comprises 371 residues: MNRSSYSSQSDNRYSRNPAVLCSFYSKIGACRHGEKCSKKHLKPISSRTILLANLYQNPTLNDDDYGHANGIGSETSQIIDNESVIKNSDTVGTVSQIDDSPHSNSGEVTKDETVETQEVETENSENIAETGDVKIDHNEDQKQIEDVKESDKVESSEEVQQDDKLHKEDTLEKESEDNIKQDENIEDAKLEDTEKDKLPEFTISQSQKDFDQFFQDIFVHISKLGQIRDIAVCENENNHLAGNVYVMFESAEDAYNANLQLNQEWYNGKPVYSDLSPVNDFNDACCEEYRDYHDCQRGAMCNYMHVRLPSSDIEESLYESQAKSYMLKQLEELKKELPGDIRSSSSTNDDETNGNENGISSTMAVLEQLS.

The C3H1-type 1 zinc-finger motif lies at 16 to 44; it reads RNPAVLCSFYSKIGACRHGEKCSKKHLKP. Positions 94–107 are enriched in polar residues; sequence TVSQIDDSPHSNSG. Positions 94-194 are disordered; that stretch reads TVSQIDDSPH…NIEDAKLEDT (101 aa). Residues 115–124 are compositionally biased toward acidic residues; it reads VETQEVETEN. Residues 132–194 are compositionally biased toward basic and acidic residues; sequence GDVKIDHNED…NIEDAKLEDT (63 aa). The region spanning 192 to 279 is the RRM domain; the sequence is EDTEKDKLPE…KPVYSDLSPV (88 aa). Residues 281-309 form a C3H1-type 2 zinc finger; it reads DFNDACCEEYRDYHDCQRGAMCNYMHVRL. The interval 337-371 is disordered; that stretch reads ELPGDIRSSSSTNDDETNGNENGISSTMAVLEQLS. Residues 355–371 show a composition bias toward polar residues; it reads GNENGISSTMAVLEQLS.

The protein resides in the nucleus. Transcription factor required for yeast cell adherence to silicone substrate. This chain is Transcriptional regulator of yeast form adherence 2 (TRY2), found in Candida albicans (strain SC5314 / ATCC MYA-2876) (Yeast).